A 450-amino-acid chain; its full sequence is MRECISVHVGQAGVQMGNACWELYCLEHGIQPDGQMPSDKTIGGGDDSFNTFFSETGAGKHVPRAIFVDLEPSVIDEVRTGTYRQLFHPEQLISGKEDAANNYARGHYTIGKEIIDQVLDRMRKLADQCTGLQGFLVFHSFGGGTGSGFTSLLMERLSVDYGKKSKLEFAIYPAPQVSTAVVEPYNSILTTHTTLEHSDCAFMVDNEAIYDICRRNLDIERPSYTNLNRLISQIVSSITASLRFDGALNVDLTEFQTNLVPYPRIHFPLATYAPVISAEKAYHEQLSVAEITNACFEPANQMVKCDPRHGKYMACCLLYRGDVVPKDVNAAIAAIKTKRSIQFVDWCPTGFKVGINYQPPTAVPGGDLAKVQRAVCMLSNTTAIAEAWARLDHKFDLMYAKRAFVHWYVGEGMEEGEFSEAREDMAALEKDYEEVGLDSYEGEEDEGEEY.

Residues 1-4 (MREC) carry the MREC motif motif. Glutamine 11 is a GTP binding site. At lysine 40 the chain carries N6-acetyllysine. The GTP site is built by glutamate 71, serine 140, glycine 144, threonine 145, threonine 179, asparagine 206, and asparagine 228. A Mg(2+)-binding site is contributed by glutamate 71. Residue glutamate 254 is part of the active site. Residue glutamate 444 is modified to 5-glutamyl polyglutamate.

This sequence belongs to the tubulin family. As to quaternary structure, dimer of alpha and beta chains. A typical microtubule is a hollow water-filled tube with an outer diameter of 25 nm and an inner diameter of 15 nM. Alpha-beta heterodimers associate head-to-tail to form protofilaments running lengthwise along the microtubule wall with the beta-tubulin subunit facing the microtubule plus end conferring a structural polarity. Microtubules usually have 13 protofilaments but different protofilament numbers can be found in some organisms and specialized cells. It depends on Mg(2+) as a cofactor. In terms of processing, some glutamate residues at the C-terminus are polyglycylated, resulting in polyglycine chains on the gamma-carboxyl group. Glycylation is mainly limited to tubulin incorporated into axonemes (cilia and flagella) whereas glutamylation is prevalent in neuronal cells, centrioles, axonemes, and the mitotic spindle. Both modifications can coexist on the same protein on adjacent residues, and lowering polyglycylation levels increases polyglutamylation, and reciprocally. The precise function of polyglycylation is still unclear. Some glutamate residues at the C-terminus are polyglutamylated, resulting in polyglutamate chains on the gamma-carboxyl group. Polyglutamylation plays a key role in microtubule severing by spastin (SPAST). SPAST preferentially recognizes and acts on microtubules decorated with short polyglutamate tails: severing activity by SPAST increases as the number of glutamates per tubulin rises from one to eight, but decreases beyond this glutamylation threshold. Post-translationally, acetylation of alpha chains at Lys-40 is located inside the microtubule lumen. This modification has been correlated with increased microtubule stability, intracellular transport and ciliary assembly. In terms of processing, undergoes a tyrosination/detyrosination cycle, the cyclic removal and re-addition of a C-terminal tyrosine residue by the enzymes tubulin tyrosine carboxypeptidase (MATCAP, VASH1 or VASH2) and tubulin tyrosine ligase (TTL), respectively. Tyrosination promotes microtubule interaction with CAP-Gly microtubule plus-end tracking proteins. Tyrosinated tubulins regulate the initiation of dynein-driven motility. Post-translationally, detyrosination is involved in metaphase plate congression by guiding chromosomes during mitosis. Detyrosination increases microtubules-dependent mechanotransduction in dystrophic cardiac and skeletal muscle. In cardiomyocytes, detyrosinated microtubules are required to resist to contractile compression during contraction.

Its subcellular location is the cytoplasm. It localises to the cytoskeleton. It carries out the reaction GTP + H2O = GDP + phosphate + H(+). Its function is as follows. Tubulin is the major constituent of microtubules, a cylinder consisting of laterally associated linear protofilaments composed of alpha- and beta-tubulin heterodimers. Microtubules grow by the addition of GTP-tubulin dimers to the microtubule end, where a stabilizing cap forms. Below the cap, tubulin dimers are in GDP-bound state, owing to GTPase activity of alpha-tubulin. This chain is Tubulin alpha chain, found in Notophthalmus viridescens (Eastern newt).